The chain runs to 290 residues: Protease HtpX (290 aa).

The next 2 membrane-spanning stretches (helical) occupy residues leucine 6–phenylalanine 26 and isoleucine 36–leucine 56. Residue histidine 143 participates in Zn(2+) binding. The active site involves glutamate 144. Residue histidine 147 participates in Zn(2+) binding. 2 helical membrane passes run leucine 158 to isoleucine 178 and isoleucine 200 to phenylalanine 220. Glutamate 225 is a binding site for Zn(2+).

Belongs to the peptidase M48B family. It depends on Zn(2+) as a cofactor.

The protein localises to the cell inner membrane. This Aeromonas salmonicida (strain A449) protein is Protease HtpX.